Here is a 639-residue protein sequence, read N- to C-terminus: MNLEKLSKPELLTLFSILEGELEARDLVIEALKAQHRDTFIEERYGKYNISDPLMALQRDFETLKEKNDGEKQPVCTNPLSILKVVMKQCKNMQERMLSQLAAAESRHRKVILDLEEERQRHAQDTAEGDDVTYMLEKERERLTQQLEFEKSQVKKFEKEQKKLSSQLEEERSRHKQLSSMLVLECKKATNKAAEEGQKAGELSLKLEKEKSRVSKLEEELAAERKRGLQTEAQVEKQLSEFDIEREQLRAKLNREENRTKTLKEEMESLKKIVKDLEASHQHSSPNEQLKKPVTVSKGTATEPLMLMSVFCQTESFPAERTHGSNIAKMTNTGLPGPATPAYSYAKTNGHCDPEIQTTRELTAGNNVENQVPPREKSVALAQEKPVENGGCPVGIETPVPMPSPLSSSGSSLSPSSTASSSLTSSPCSSPVLTKRLLGSSASSPGYQSSYQVGINQRFHAARHKFQSQADQDQQASGLQSPPSRDLSPTLIDNSAAKQLARNTVTQVLSRFTSQQGPIKPVSPNSSPFGTDYRNLANTANPRGDTSHSPTPGKVSSPLSPLSPGIKSPTIPRAERGNPPPIPPKKPGLTPSPSATTPLTKTHSQAASLTTAEDLASSCSSNTVVANGKDVELLLPTSS.

Residues 87 to 285 (MKQCKNMQER…DLEASHQHSS (199 aa)) adopt a coiled-coil conformation. S284 and S285 each carry phosphoserine. 3 disordered regions span residues 387 to 430 (VENG…PCSS), 463 to 490 (RHKF…LSPT), and 511 to 609 (RFTS…AASL). Composition is skewed to low complexity over residues 405–430 (PLSS…PCSS) and 467–477 (QSQADQDQQAS). Phosphoserine occurs at positions 481, 488, 523, 527, 560, 563, and 568. Residues 511–529 (RFTSQQGPIKPVSPNSSPF) show a composition bias toward polar residues. 2 positions are modified to phosphothreonine: T570 and T590. Over residues 587–600 (PGLTPSPSATTPLT) the composition is skewed to low complexity. The residue at position 592 (S592) is a Phosphoserine.

As to quaternary structure, interacts with CTTN/cortactin; this interaction may redistribute CTTN to stress fibers. May form homomers. Associates with the core of STRIPAK complexes composed of PP2A catalytic and scaffolding subunits, the striatins (PP2A regulatory subunits), the striatin-associated proteins MOB4, STRIP1 and STRIP2, PDCD10 and members of the STE20 kinases, such as STK24 and STK26.

It is found in the cell projection. It localises to the lamellipodium. Its subcellular location is the cytoplasm. The protein resides in the cytoskeleton. The protein localises to the stress fiber. Its function is as follows. Regulates lamellipodial actin dynamics in a CTTN-dependent manner. Associates with core striatin-interacting phosphatase and kinase (STRIPAK) complex to form CTTNBP2NL-STRIPAK complexes. STRIPAK complexes have critical roles in protein (de)phosphorylation and are regulators of multiple signaling pathways including Hippo, MAPK, nuclear receptor and cytoskeleton remodeling. Different types of STRIPAK complexes are involved in a variety of biological processes such as cell growth, differentiation, apoptosis, metabolism and immune regulation. The sequence is that of CTTNBP2 N-terminal-like protein from Homo sapiens (Human).